A 350-amino-acid polypeptide reads, in one-letter code: Phenylalanine--tRNA ligase alpha subunit (350 aa).

Mg(2+) is bound at residue glutamate 271.

The protein belongs to the class-II aminoacyl-tRNA synthetase family. Phe-tRNA synthetase alpha subunit type 1 subfamily. Tetramer of two alpha and two beta subunits. Mg(2+) serves as cofactor.

Its subcellular location is the cytoplasm. The enzyme catalyses tRNA(Phe) + L-phenylalanine + ATP = L-phenylalanyl-tRNA(Phe) + AMP + diphosphate + H(+). The chain is Phenylalanine--tRNA ligase alpha subunit from Paracidovorax citrulli (strain AAC00-1) (Acidovorax citrulli).